The chain runs to 718 residues: F-box/LRR-repeat protein 18 (718 aa).

One can recognise an F-box domain in the interval 25 to 72 (GVHLLGFSDEILLHILSHVPSTDLILNVRRTCRKLAALCLDKSLIHTV). 12 LRR repeats span residues 77–103 (DYQA…SMAG), 104–128 (CYWL…NLSG), 129–153 (CHLT…AIDV), 177–201 (KQTL…LLYF), 324–352 (CTLS…NLSG), 367–392 (EDDI…NLSA), 393–422 (AHHH…SLPV), 468–492 (CPQP…ELIG), 516–540 (AQSV…TLAQ), 542–567 (PSVL…SLAN), 572–597 (GKVV…RLEQ), and 599–623 (YFSA…CLVS).

As to quaternary structure, directly interacts with SKP1 and CUL1.

Substrate-recognition component of the SCF (SKP1-CUL1-F-box protein)-type E3 ubiquitin ligase complex. The protein is F-box/LRR-repeat protein 18 (FBXL18) of Homo sapiens (Human).